The chain runs to 1486 residues: Chromosome partition protein MukB (1486 aa).

Glycine 34–serine 41 serves as a coordination point for ATP. Coiled coils occupy residues leucine 326 to glutamine 418, leucine 444 to glutamine 480, and arginine 509 to valine 603. The interval proline 666–arginine 783 is flexible hinge. Coiled coils occupy residues glutamate 835–glutamate 923, glutamate 977–alanine 1115, and valine 1209–serine 1266.

It belongs to the SMC family. MukB subfamily. In terms of assembly, homodimerization via its hinge domain. Binds to DNA via its C-terminal region. Interacts, and probably forms a ternary complex, with MukE and MukF via its C-terminal region. The complex formation is stimulated by calcium or magnesium. Interacts with tubulin-related protein FtsZ.

Its subcellular location is the cytoplasm. The protein resides in the nucleoid. Plays a central role in chromosome condensation, segregation and cell cycle progression. Functions as a homodimer, which is essential for chromosome partition. Involved in negative DNA supercoiling in vivo, and by this means organize and compact chromosomes. May achieve or facilitate chromosome segregation by condensation DNA from both sides of a centrally located replisome during cell division. This Escherichia coli (strain K12 / MC4100 / BW2952) protein is Chromosome partition protein MukB.